A 179-amino-acid polypeptide reads, in one-letter code: Protein GrpE (179 aa).

The protein belongs to the GrpE family. Homodimer.

The protein resides in the cytoplasm. Functionally, participates actively in the response to hyperosmotic and heat shock by preventing the aggregation of stress-denatured proteins, in association with DnaK and GrpE. It is the nucleotide exchange factor for DnaK and may function as a thermosensor. Unfolded proteins bind initially to DnaJ; upon interaction with the DnaJ-bound protein, DnaK hydrolyzes its bound ATP, resulting in the formation of a stable complex. GrpE releases ADP from DnaK; ATP binding to DnaK triggers the release of the substrate protein, thus completing the reaction cycle. Several rounds of ATP-dependent interactions between DnaJ, DnaK and GrpE are required for fully efficient folding. This is Protein GrpE from Rickettsia felis (strain ATCC VR-1525 / URRWXCal2) (Rickettsia azadi).